Consider the following 360-residue polypeptide: Peptide chain release factor 1 (360 aa).

Gln237 is modified (N5-methylglutamine).

Belongs to the prokaryotic/mitochondrial release factor family. Methylated by PrmC. Methylation increases the termination efficiency of RF1.

It localises to the cytoplasm. Functionally, peptide chain release factor 1 directs the termination of translation in response to the peptide chain termination codons UAG and UAA. The protein is Peptide chain release factor 1 (prfA) of Pseudomonas aeruginosa (strain ATCC 15692 / DSM 22644 / CIP 104116 / JCM 14847 / LMG 12228 / 1C / PRS 101 / PAO1).